The sequence spans 39 residues: uncharacterized protein (39 aa).

Positions 1–16 (MLNIQPTQSIVNNQPK) are enriched in polar residues. Positions 1 to 39 (MLNIQPTQSIVNNQPKSDQKKQKPADLLKEFYDKTGNRN) are disordered. A compositionally biased stretch (basic and acidic residues) spans 17-39 (SDQKKQKPADLLKEFYDKTGNRN).

This is an uncharacterized protein from Dictyostelium discoideum (Social amoeba).